A 90-amino-acid polypeptide reads, in one-letter code: Cell division topological specificity factor (90 aa).

Belongs to the MinE family.

In terms of biological role, prevents the cell division inhibition by proteins MinC and MinD at internal division sites while permitting inhibition at polar sites. This ensures cell division at the proper site by restricting the formation of a division septum at the midpoint of the long axis of the cell. The sequence is that of Cell division topological specificity factor from Francisella philomiragia subsp. philomiragia (strain ATCC 25017 / CCUG 19701 / FSC 153 / O#319-036).